Reading from the N-terminus, the 485-residue chain is Glutamyl-tRNA(Gln) amidotransferase subunit A (485 aa).

Catalysis depends on charge relay system residues lysine 74 and serine 149. The active-site Acyl-ester intermediate is serine 173.

This sequence belongs to the amidase family. GatA subfamily. As to quaternary structure, heterotrimer of A, B and C subunits.

It carries out the reaction L-glutamyl-tRNA(Gln) + L-glutamine + ATP + H2O = L-glutaminyl-tRNA(Gln) + L-glutamate + ADP + phosphate + H(+). Its function is as follows. Allows the formation of correctly charged Gln-tRNA(Gln) through the transamidation of misacylated Glu-tRNA(Gln) in organisms which lack glutaminyl-tRNA synthetase. The reaction takes place in the presence of glutamine and ATP through an activated gamma-phospho-Glu-tRNA(Gln). This is Glutamyl-tRNA(Gln) amidotransferase subunit A from Synechococcus sp. (strain RCC307).